Here is a 213-residue protein sequence, read N- to C-terminus: Orotate phosphoribosyltransferase (213 aa).

Lysine 26 is a binding site for 5-phospho-alpha-D-ribose 1-diphosphate. 34-35 (FF) contacts orotate. 5-phospho-alpha-D-ribose 1-diphosphate is bound by residues 72–73 (YK), arginine 99, lysine 100, lysine 103, histidine 105, and 124–132 (DDVITAGTA). Orotate is bound by residues threonine 128 and arginine 156.

Belongs to the purine/pyrimidine phosphoribosyltransferase family. PyrE subfamily. In terms of assembly, homodimer. Mg(2+) serves as cofactor.

It carries out the reaction orotidine 5'-phosphate + diphosphate = orotate + 5-phospho-alpha-D-ribose 1-diphosphate. The protein operates within pyrimidine metabolism; UMP biosynthesis via de novo pathway; UMP from orotate: step 1/2. Its function is as follows. Catalyzes the transfer of a ribosyl phosphate group from 5-phosphoribose 1-diphosphate to orotate, leading to the formation of orotidine monophosphate (OMP). This is Orotate phosphoribosyltransferase from Edwardsiella ictaluri (strain 93-146).